Reading from the N-terminus, the 121-residue chain is Iron-sulfur cluster assembly protein CyaY (121 aa).

It belongs to the frataxin family.

Its function is as follows. Involved in iron-sulfur (Fe-S) cluster assembly. May act as a regulator of Fe-S biogenesis. This chain is Iron-sulfur cluster assembly protein CyaY, found in Buchnera aphidicola subsp. Schizaphis graminum (strain Sg).